A 230-amino-acid chain; its full sequence is Orotidine 5'-phosphate decarboxylase (230 aa).

Substrate contacts are provided by residues Asp-10, Lys-32, 59–68 (DLKFHDIPRT), Thr-116, Arg-177, Gln-186, Gly-206, and Arg-207. Lys-61 acts as the Proton donor in catalysis.

It belongs to the OMP decarboxylase family. Type 1 subfamily. Homodimer.

The catalysed reaction is orotidine 5'-phosphate + H(+) = UMP + CO2. The protein operates within pyrimidine metabolism; UMP biosynthesis via de novo pathway; UMP from orotate: step 2/2. Its function is as follows. Catalyzes the decarboxylation of orotidine 5'-monophosphate (OMP) to uridine 5'-monophosphate (UMP). This chain is Orotidine 5'-phosphate decarboxylase, found in Methylacidiphilum infernorum (isolate V4) (Methylokorus infernorum (strain V4)).